We begin with the raw amino-acid sequence, 349 residues long: Protein-glutamate methylesterase/protein-glutamine glutaminase (349 aa).

The Response regulatory domain maps to Arg5–Met122. The residue at position 56 (Asp56) is a 4-aspartylphosphate. The region spanning Leu152–Gly344 is the CheB-type methylesterase domain. Residues Ser164, His190, and Asp286 contribute to the active site.

The protein belongs to the CheB family. Post-translationally, phosphorylated by CheA. Phosphorylation of the N-terminal regulatory domain activates the methylesterase activity.

It localises to the cytoplasm. The enzyme catalyses [protein]-L-glutamate 5-O-methyl ester + H2O = L-glutamyl-[protein] + methanol + H(+). It catalyses the reaction L-glutaminyl-[protein] + H2O = L-glutamyl-[protein] + NH4(+). In terms of biological role, involved in chemotaxis. Part of a chemotaxis signal transduction system that modulates chemotaxis in response to various stimuli. Catalyzes the demethylation of specific methylglutamate residues introduced into the chemoreceptors (methyl-accepting chemotaxis proteins or MCP) by CheR. Also mediates the irreversible deamidation of specific glutamine residues to glutamic acid. This chain is Protein-glutamate methylesterase/protein-glutamine glutaminase, found in Escherichia coli O6:K15:H31 (strain 536 / UPEC).